The primary structure comprises 602 residues: Elongation factor 4 (602 aa).

Residues 7–189 enclose the tr-type G domain; it reads RKIRNFSIIA…AIVKNIPPPT (183 aa). GTP is bound by residues 19-24 and 136-139; these read DHGKST and NKID.

It belongs to the TRAFAC class translation factor GTPase superfamily. Classic translation factor GTPase family. LepA subfamily.

It localises to the cell membrane. It carries out the reaction GTP + H2O = GDP + phosphate + H(+). Functionally, required for accurate and efficient protein synthesis under certain stress conditions. May act as a fidelity factor of the translation reaction, by catalyzing a one-codon backward translocation of tRNAs on improperly translocated ribosomes. Back-translocation proceeds from a post-translocation (POST) complex to a pre-translocation (PRE) complex, thus giving elongation factor G a second chance to translocate the tRNAs correctly. Binds to ribosomes in a GTP-dependent manner. This chain is Elongation factor 4, found in Alkaliphilus metalliredigens (strain QYMF).